Consider the following 377-residue polypeptide: Actin-related protein T2 (377 aa).

This sequence belongs to the actin family.

Its subcellular location is the cytoplasm. The protein localises to the cytoskeleton. The protein is Actin-related protein T2 (ACTRT2) of Homo sapiens (Human).